Reading from the N-terminus, the 373-residue chain is D-alanine--D-alanine ligase (373 aa).

An ATP-grasp domain is found at Lys156–Glu363. Residue Cys184–Glu239 participates in ATP binding. Mg(2+) is bound by residues Asp318, Glu330, and Asn332.

This sequence belongs to the D-alanine--D-alanine ligase family. Requires Mg(2+) as cofactor. It depends on Mn(2+) as a cofactor.

It localises to the cytoplasm. The enzyme catalyses 2 D-alanine + ATP = D-alanyl-D-alanine + ADP + phosphate + H(+). The protein operates within cell wall biogenesis; peptidoglycan biosynthesis. Its function is as follows. Cell wall formation. This chain is D-alanine--D-alanine ligase, found in Mycobacterium bovis (strain BCG / Pasteur 1173P2).